A 129-amino-acid polypeptide reads, in one-letter code: uncharacterized protein (129 aa).

It belongs to the asfivirus C129R family.

Its subcellular location is the virion. In terms of biological role, plays a role in the inhibition of type I interferon signaling pathway. Mechanistically, specifically interacts with 2',3'-cGAMP and cleaves it via its phosphodiesterase activity. In turn, prevents 2',3'-cGAMP interaction with host ER-resident STING1 leading to inhibition of downstream signaling pathway and type I interferon production. This is an uncharacterized protein from Ornithodoros (relapsing fever ticks).